The primary structure comprises 374 residues: Carbamoyl phosphate synthase small chain (374 aa).

A CPSase region spans residues 1 to 183 (MVLADGQMIW…QNGYSVVDNQ (183 aa)). Positions 41, 235, and 237 each coordinate L-glutamine. Positions 187–374 (HVVAIDYGLK…FIDLIAKERP (188 aa)) constitute a Glutamine amidotransferase type-1 domain. The active-site Nucleophile is the Cys-264. The L-glutamine site is built by Leu-265, Gln-268, Asn-306, Gly-308, and Phe-309. Catalysis depends on residues His-348 and Glu-350.

This sequence belongs to the CarA family. As to quaternary structure, composed of two chains; the small (or glutamine) chain promotes the hydrolysis of glutamine to ammonia, which is used by the large (or ammonia) chain to synthesize carbamoyl phosphate. Tetramer of heterodimers (alpha,beta)4.

It catalyses the reaction hydrogencarbonate + L-glutamine + 2 ATP + H2O = carbamoyl phosphate + L-glutamate + 2 ADP + phosphate + 2 H(+). The enzyme catalyses L-glutamine + H2O = L-glutamate + NH4(+). The protein operates within amino-acid biosynthesis; L-arginine biosynthesis; carbamoyl phosphate from bicarbonate: step 1/1. Its pathway is pyrimidine metabolism; UMP biosynthesis via de novo pathway; (S)-dihydroorotate from bicarbonate: step 1/3. Functionally, small subunit of the glutamine-dependent carbamoyl phosphate synthetase (CPSase). CPSase catalyzes the formation of carbamoyl phosphate from the ammonia moiety of glutamine, carbonate, and phosphate donated by ATP, constituting the first step of 2 biosynthetic pathways, one leading to arginine and/or urea and the other to pyrimidine nucleotides. The small subunit (glutamine amidotransferase) binds and cleaves glutamine to supply the large subunit with the substrate ammonia. This chain is Carbamoyl phosphate synthase small chain, found in Zymomonas mobilis subsp. mobilis (strain ATCC 31821 / ZM4 / CP4).